Consider the following 303-residue polypeptide: N-acetylmuramic acid 6-phosphate etherase (303 aa).

Positions 1–21 (MQPSQLRSLTTESRNPNTMGI) are disordered. Residues 58-221 (AYDSISNGGR…STSVMIRQGK (164 aa)) enclose the SIS domain. E86 functions as the Proton donor in the catalytic mechanism. E117 is a catalytic residue.

Belongs to the GCKR-like family. MurNAc-6-P etherase subfamily. As to quaternary structure, homodimer.

The enzyme catalyses N-acetyl-D-muramate 6-phosphate + H2O = N-acetyl-D-glucosamine 6-phosphate + (R)-lactate. It functions in the pathway amino-sugar metabolism; N-acetylmuramate degradation. Functionally, specifically catalyzes the cleavage of the D-lactyl ether substituent of MurNAc 6-phosphate, producing GlcNAc 6-phosphate and D-lactate. The chain is N-acetylmuramic acid 6-phosphate etherase from Bacillus pumilus (strain SAFR-032).